The following is a 147-amino-acid chain: NADPH-dependent 7-cyano-7-deazaguanine reductase (147 aa).

Residues 1–23 (MQTTHLGKNSPIPQSPEEASLDY) are disordered. Cys46 (thioimide intermediate) is an active-site residue. Asp53 serves as the catalytic Proton donor. Residues 68–70 (VES) and 87–88 (HE) contribute to the substrate site.

It belongs to the GTP cyclohydrolase I family. QueF type 1 subfamily.

The protein resides in the cytoplasm. The catalysed reaction is 7-aminomethyl-7-carbaguanine + 2 NADP(+) = 7-cyano-7-deazaguanine + 2 NADPH + 3 H(+). Its pathway is tRNA modification; tRNA-queuosine biosynthesis. Its function is as follows. Catalyzes the NADPH-dependent reduction of 7-cyano-7-deazaguanine (preQ0) to 7-aminomethyl-7-deazaguanine (preQ1). The protein is NADPH-dependent 7-cyano-7-deazaguanine reductase of Zymomonas mobilis subsp. mobilis (strain ATCC 31821 / ZM4 / CP4).